Here is a 175-residue protein sequence, read N- to C-terminus: uncharacterized protein (175 aa).

The Extracellular portion of the chain corresponds to 1-2 (ME). The helical transmembrane segment at 3 to 23 (SIILSIAIFIGVLLGTSVGAG) threads the bilayer. Over 24 to 151 (SGSSISPDVD…TGISTTMNAR (128 aa)) the chain is Cytoplasmic. The interval 26-88 (SSISPDVDAG…DVGAGSGSSI (63 aa)) is disordered. Positions 59–78 (FSGSSTSPDVDAGSGSSTSP) are enriched in polar residues. A helical transmembrane segment spans residues 152–172 (VAVLITAAILSAPVTAIALLE). Topologically, residues 173–175 (ARR) are extracellular.

It is found in the membrane. This is an uncharacterized protein from Saccharomyces cerevisiae (strain ATCC 204508 / S288c) (Baker's yeast).